A 452-amino-acid polypeptide reads, in one-letter code: Flavin-containing monooxygenase FMO GS-OX-like 4 (452 aa).

17–22 (GAGAAG) lines the FAD pocket. Residue 217–222 (GNSASA) coordinates NADP(+).

Belongs to the FMO family. FAD serves as cofactor.

Catalyzes the conversion of methylthioalkyl glucosinolates of any chain length into methylsulfinylalkyl glucosinolates. In Arabidopsis thaliana (Mouse-ear cress), this protein is Flavin-containing monooxygenase FMO GS-OX-like 4.